The following is a 247-amino-acid chain: MSQVNMRDMLKAGVHFGHQTRYWNPKMGKYIFGARNKIHIINLEKTLPMFNEALTFVERLASGKNKILFVGTKRSAGKIVAEEAARCGSPYVDHRWLGGMLTNFKTIRQSIKRLRELEVQSEDGTFAKLTKKEALMRTRDLEKLDRSLGGIKDMGGLPDALFVIDVDHERIAITEANKLGIPVIGVVDTNSSPEGVDYIIPGNDDAIRAIQLYMGSMADAVIRGRNNVAGGTDVFVEEAPAAAAVEG.

This sequence belongs to the universal ribosomal protein uS2 family.

The chain is Small ribosomal subunit protein uS2 from Pseudomonas savastanoi pv. phaseolicola (strain 1448A / Race 6) (Pseudomonas syringae pv. phaseolicola (strain 1448A / Race 6)).